We begin with the raw amino-acid sequence, 463 residues long: Interleukin enhancer-binding factor 2 (463 aa).

Position 94 is an asymmetric dimethylarginine; alternate (Arg94). Arg94 bears the Omega-N-methylarginine; alternate mark. Residues 108-444 (RHILAYDWLA…PEKKEGEEEE (337 aa)) enclose the DZF domain. An Omega-N-methylarginine modification is found at Arg145. Residue Lys166 forms a Glycyl lysine isopeptide (Lys-Gly) (interchain with G-Cter in ubiquitin) linkage. Ser173 and Ser189 each carry phosphoserine. Glycyl lysine isopeptide (Lys-Gly) (interchain with G-Cter in SUMO2) cross-links involve residues Lys259 and Lys437. Residues 424–463 (VTPSEKAYEKPPEKKEGEEEEENTEEPPQGEEEESMETQE) form a disordered region. The span at 429 to 440 (KAYEKPPEKKEG) shows a compositional bias: basic and acidic residues. The segment covering 441–463 (EEEEENTEEPPQGEEEESMETQE) has biased composition (acidic residues). Phosphothreonine is present on Thr461.

Forms heterodimers with ILF3. ILF2-ILF3 heterodimers may also bind to PRKDC/XRCC7: this may stabilize the interaction of PRKDC/XRCC7 and the heterodimeric complex of G22P1/KU70 and XRCC5/KU80. Forms a complex with ILF3, YLPM1, KHDRBS1, RBMX, NCOA5 and PPP1CA. Identified in a IGF2BP1-dependent mRNP granule complex containing untranslated mRNAs. Interacts with IGF2BP1. Interacts with CRBN; this interaction promotes ubiquitination and subsequent degradation of ILF2. Ubiquitinated at Lys-166 by CRBN with polyubiquitin chains by the CUL4-RING E3 ligase (CRL4-CRBN) and then degraded by the proteasome.

The protein localises to the nucleus. It is found in the nucleolus. It localises to the cytoplasm. In terms of biological role, chromatin-interacting protein that forms a stable heterodimer with interleukin enhancer-binding factor 3/ILF3 and plays a role in several biological processes including transcription, innate immunity or cell growth. Essential for the efficient reshuttling of ILF3 (isoform 1 and isoform 2) into the nucleus. Together with ILF3, forms an RNA-binding complex that is required for mitotic progression and cytokinesis by regulating the expression of a cluster of mitotic genes. Mechanistically, competes with STAU1/STAU2-mediated mRNA decay. Plays also a role in the inhibition of various viruses including Japanese encephalitis virus or enterovirus 71. The chain is Interleukin enhancer-binding factor 2 (Ilf2) from Rattus norvegicus (Rat).